Here is a 580-residue protein sequence, read N- to C-terminus: MNYLVNYCKISFYFLMSISLSLFLISLKFLLMDLVYFIEWEILSLQSMSIVMTFLFDWMSLMFMSFVLLISSLVIFYSNQYMEEDYNINRFILLVLMFVMSMMMLIISPNLISILLGWDGLGLVSYCLVIYFQNVKSYNAGMLTALSNRIGDVALLLAIAWMLNYGSWNYIFYLDMMKNNIEMMIIGGLVMLAAMTKSAQIPFSSWLPAAMAAPTPVSALVHSSTLVTAGVYLLIRFNDVLMNWWMAQFLLLVSGLTMFMAGLGANFEFDLKKIIALSTLSQLGLMMSILSMGFYKLAFFHLLTHALFKALLFMCAGSIIHNMKNSQDIRMMGSLSMSMPLTCSCFNVANLALCGMPFLAGFYSKDLILEMVMLSYVNVFSFFLFFFSTGLTVCYSFRLVYYSMTGDFNSSSLHPLNDSGWTMLFSICFLTVMAVIGGSMLSWLMFLNPAMICLPLEMKLLTLFVCIVGGLMGYLISDVKLFFTNKALYFYNFTNFVGSMWFMPVISTLGVINYPLKLGLYSYKSFDQGWSEFFGGQMVYFQLKNYSLYLQEFQSNSLKIYLLSYMLWFIILLMLVVLVN.

16 helical membrane-spanning segments follow: residues 12-32 (FYFLMSISLSLFLISLKFLLM), 50-70 (IVMTFLFDWMSLMFMSFVLLI), 92-112 (ILLVLMFVMSMMMLIISPNLI), 113-133 (SILLGWDGLGLVSYCLVIYFQ), 153-173 (VALLLAIAWMLNYGSWNYIFY), 183-203 (MMIIGGLVMLAAMTKSAQIPF), 215-235 (TPVSALVHSSTLVTAGVYLLI), 244-264 (WWMAQFLLLVSGLTMFMAGLG), 274-293 (IIALSTLSQLGLMMSILSMG), 298-320 (AFFHLLTHALFKALLFMCAGSII), 343-363 (CSCFNVANLALCGMPFLAGFY), 367-387 (LILEMVMLSYVNVFSFFLFFF), 427-447 (ICFLTVMAVIGGSMLSWLMFL), 463-483 (LFVCIVGGLMGYLISDVKLFF), 496-516 (FVGSMWFMPVISTLGVINYPL), and 560-580 (IYLLSYMLWFIILLMLVVLVN).

Belongs to the complex I subunit 5 family.

The protein localises to the mitochondrion inner membrane. The enzyme catalyses a ubiquinone + NADH + 5 H(+)(in) = a ubiquinol + NAD(+) + 4 H(+)(out). In terms of biological role, core subunit of the mitochondrial membrane respiratory chain NADH dehydrogenase (Complex I) that is believed to belong to the minimal assembly required for catalysis. Complex I functions in the transfer of electrons from NADH to the respiratory chain. The immediate electron acceptor for the enzyme is believed to be ubiquinone. The sequence is that of NADH-ubiquinone oxidoreductase chain 5 (mt:ND5) from Anopheles gambiae (African malaria mosquito).